Consider the following 236-residue polypeptide: Ubiquinone biosynthesis O-methyltransferase (236 aa).

S-adenosyl-L-methionine-binding residues include arginine 40, glycine 59, aspartate 80, and leucine 124.

Belongs to the methyltransferase superfamily. UbiG/COQ3 family.

The enzyme catalyses a 3-demethylubiquinol + S-adenosyl-L-methionine = a ubiquinol + S-adenosyl-L-homocysteine + H(+). It carries out the reaction a 3-(all-trans-polyprenyl)benzene-1,2-diol + S-adenosyl-L-methionine = a 2-methoxy-6-(all-trans-polyprenyl)phenol + S-adenosyl-L-homocysteine + H(+). Its pathway is cofactor biosynthesis; ubiquinone biosynthesis. In terms of biological role, O-methyltransferase that catalyzes the 2 O-methylation steps in the ubiquinone biosynthetic pathway. The chain is Ubiquinone biosynthesis O-methyltransferase from Saccharophagus degradans (strain 2-40 / ATCC 43961 / DSM 17024).